The following is a 228-amino-acid chain: R-spondin-4 (228 aa).

An N-terminal signal peptide occupies residues 1 to 19 (MRAPLCLLLLLAHAVDMLA). The N-linked (GlcNAc...) asparagine glycan is linked to asparagine 34. Intrachain disulfides connect cysteine 35/cysteine 41, cysteine 38/cysteine 47, cysteine 50/cysteine 69, cysteine 73/cysteine 88, cysteine 91/cysteine 98, cysteine 95/cysteine 104, cysteine 107/cysteine 118, cysteine 122/cysteine 135, cysteine 139/cysteine 181, cysteine 150/cysteine 157, and cysteine 190/cysteine 196. An FU repeat occupies 85–128 (ANRCKKCGATCESCFSQDFCIRCKRRFHLYKGKCLPSCPPGTLT). A TSP type-1 domain is found at 138–197 (ECEPSPWGSWSPCIHNGKTCGSGWGLETRVREAGPAKQEETASCRVLSESRKCPIKRLCP). Residues 193–228 (KRLCPGERNPRQKNRKDRRQRKDRKLERRPHQRGSQ) form a disordered region. Residues 203-228 (RQKNRKDRRQRKDRKLERRPHQRGSQ) show a composition bias toward basic residues.

This sequence belongs to the R-spondin family. Binds heparin. Interacts with LGR4, LGR5 and LGR6.

It localises to the secreted. Its function is as follows. Activator of the canonical Wnt signaling pathway by acting as a ligand for LGR4-6 receptors. Upon binding to LGR4-6 (LGR4, LGR5 or LGR6), LGR4-6 associate with phosphorylated LRP6 and frizzled receptors that are activated by extracellular Wnt receptors, triggering the canonical Wnt signaling pathway to increase expression of target genes. Also regulates the canonical Wnt/beta-catenin-dependent pathway and non-canonical Wnt signaling by acting as an inhibitor of ZNRF3, an important regulator of the Wnt signaling pathway. In Mus musculus (Mouse), this protein is R-spondin-4 (Rspo4).